Consider the following 190-residue polypeptide: Small ribosomal subunit protein eS7 (190 aa).

It belongs to the eukaryotic ribosomal protein eS7 family.

In Manduca sexta (Tobacco hawkmoth), this protein is Small ribosomal subunit protein eS7 (RpS7).